The following is a 626-amino-acid chain: tRNA 5-methylaminomethyl-2-thiouridine biosynthesis bifunctional protein MnmC (626 aa).

The segment at 1 to 237 (MKGPQLDYAD…KRDMTVGVFQ (237 aa)) is tRNA (mnm(5)s(2)U34)-methyltransferase. Residues 255-626 (IGSGLSGANV…RVLPNRFSQE (372 aa)) form an FAD-dependent cmnm(5)s(2)U34 oxidoreductase region.

In the N-terminal section; belongs to the methyltransferase superfamily. tRNA (mnm(5)s(2)U34)-methyltransferase family. It in the C-terminal section; belongs to the DAO family. Requires FAD as cofactor.

Its subcellular location is the cytoplasm. The enzyme catalyses 5-aminomethyl-2-thiouridine(34) in tRNA + S-adenosyl-L-methionine = 5-methylaminomethyl-2-thiouridine(34) in tRNA + S-adenosyl-L-homocysteine + H(+). Functionally, catalyzes the last two steps in the biosynthesis of 5-methylaminomethyl-2-thiouridine (mnm(5)s(2)U) at the wobble position (U34) in tRNA. Catalyzes the FAD-dependent demodification of cmnm(5)s(2)U34 to nm(5)s(2)U34, followed by the transfer of a methyl group from S-adenosyl-L-methionine to nm(5)s(2)U34, to form mnm(5)s(2)U34. The sequence is that of tRNA 5-methylaminomethyl-2-thiouridine biosynthesis bifunctional protein MnmC from Hahella chejuensis (strain KCTC 2396).